Here is a 195-residue protein sequence, read N- to C-terminus: MLWIFWLVFAYFLGSIPFGLFIGKICCNCDIRTEGSKSTGATNVARLCGFKYGVAALVLDVAKGFVPVLMAYQYSHNWIFISLVAAAAVIGHVFSIFMDMKGGKAVATTIGVFLALAPVATFYSIVFLLAVIALSGFVSMGSLTFAVALPFFTLVTGSVGMVPLACGMTVLLFWTHRENIRRLAKGQENSWKKKK.

A run of 5 helical transmembrane segments spans residues 2–22 (LWIFWLVFAYFLGSIPFGLFI), 52–72 (YGVAALVLDVAKGFVPVLMAY), 78–98 (WIFISLVAAAAVIGHVFSIFM), 112–132 (VFLALAPVATFYSIVFLLAVI), and 145–165 (FAVALPFFTLVTGSVGMVPLA).

Belongs to the PlsY family. As to quaternary structure, probably interacts with PlsX.

It localises to the cell inner membrane. The enzyme catalyses an acyl phosphate + sn-glycerol 3-phosphate = a 1-acyl-sn-glycero-3-phosphate + phosphate. It functions in the pathway lipid metabolism; phospholipid metabolism. In terms of biological role, catalyzes the transfer of an acyl group from acyl-phosphate (acyl-PO(4)) to glycerol-3-phosphate (G3P) to form lysophosphatidic acid (LPA). This enzyme utilizes acyl-phosphate as fatty acyl donor, but not acyl-CoA or acyl-ACP. This chain is Glycerol-3-phosphate acyltransferase, found in Maridesulfovibrio salexigens (strain ATCC 14822 / DSM 2638 / NCIMB 8403 / VKM B-1763) (Desulfovibrio salexigens).